We begin with the raw amino-acid sequence, 373 residues long: StAR-related lipid transfer protein 7, mitochondrial (373 aa).

A mitochondrion-targeting transit peptide spans 1–61; it reads MFPRRPPATL…YSESSRCALL (61 aa). A coiled-coil region spans residues 89 to 114; the sequence is DEERIQEEELQRSINEMKRLEEMSNI. The region spanning 115-330 is the START domain; that stretch reads FQSSGVENYP…LHMATLKAKN (216 aa). Disordered regions lie at residues 118-141 and 347-373; these read SGVE…KDKE and SSEA…IEYA.

In terms of processing, proteolytically cleaved by PARL. Expressed in epithelial cells of airways, peripheral bronchioles and alveoli, as well as in the basal cell layer of the epidermis (at protein level).

It localises to the mitochondrion. In terms of biological role, may play a protective role in mucosal tissues by preventing exaggerated allergic responses. The protein is StAR-related lipid transfer protein 7, mitochondrial (Stard7) of Mus musculus (Mouse).